We begin with the raw amino-acid sequence, 515 residues long: ATP synthase subunit alpha (515 aa).

Glycine 169 to threonine 176 serves as a coordination point for ATP.

This sequence belongs to the ATPase alpha/beta chains family. F-type ATPases have 2 components, CF(1) - the catalytic core - and CF(0) - the membrane proton channel. CF(1) has five subunits: alpha(3), beta(3), gamma(1), delta(1), epsilon(1). CF(0) has three main subunits: a(1), b(2) and c(9-12). The alpha and beta chains form an alternating ring which encloses part of the gamma chain. CF(1) is attached to CF(0) by a central stalk formed by the gamma and epsilon chains, while a peripheral stalk is formed by the delta and b chains.

The protein resides in the cell inner membrane. The enzyme catalyses ATP + H2O + 4 H(+)(in) = ADP + phosphate + 5 H(+)(out). Its function is as follows. Produces ATP from ADP in the presence of a proton gradient across the membrane. The alpha chain is a regulatory subunit. In Neisseria gonorrhoeae (strain ATCC 700825 / FA 1090), this protein is ATP synthase subunit alpha.